The chain runs to 432 residues: D-amino acid dehydrogenase (432 aa).

Position 3–17 (3–17) interacts with FAD; the sequence is VVILGSGVVGVASAW.

The protein belongs to the DadA oxidoreductase family. Requires FAD as cofactor.

It carries out the reaction a D-alpha-amino acid + A + H2O = a 2-oxocarboxylate + AH2 + NH4(+). It participates in amino-acid degradation; D-alanine degradation; NH(3) and pyruvate from D-alanine: step 1/1. In terms of biological role, oxidative deamination of D-amino acids. In Shigella sonnei (strain Ss046), this protein is D-amino acid dehydrogenase.